The sequence spans 330 residues: Putative [LysW]-L-2-aminoadipate/[LysW]-L-glutamate phosphate reductase (330 aa).

10-13 (SGYI) lines the NADP(+) pocket. Cysteine 142 is an active-site residue. NADP(+) is bound at residue asparagine 297.

The protein belongs to the NAGSA dehydrogenase family. Type 1 subfamily. LysY sub-subfamily.

It is found in the cytoplasm. It carries out the reaction [amino-group carrier protein]-C-terminal-N-(1-carboxy-5-oxopentan-1-yl)-L-glutamine + phosphate + NADP(+) = [amino-group carrier protein]-C-terminal-N-(1-carboxy-5-phosphooxy-5-oxopentan-1-yl)-L-glutamine + NADPH + H(+). The enzyme catalyses [amino-group carrier protein]-C-terminal-gamma-(L-glutamyl-5-semialdehyde)-L-glutamate + phosphate + NADP(+) = [amino-group carrier protein]-C-terminal-gamma-(5-phospho-L-glutamyl)-L-glutamate + NADPH + H(+). The protein operates within amino-acid biosynthesis; L-lysine biosynthesis via AAA pathway; L-lysine from L-alpha-aminoadipate (Thermus route): step 3/5. It functions in the pathway amino-acid biosynthesis; L-arginine biosynthesis. Its function is as follows. Involved in both the arginine and lysine biosynthetic pathways. This Pyrococcus furiosus (strain ATCC 43587 / DSM 3638 / JCM 8422 / Vc1) protein is Putative [LysW]-L-2-aminoadipate/[LysW]-L-glutamate phosphate reductase.